The sequence spans 397 residues: CCA-adding enzyme (397 aa).

2 residues coordinate ATP: G26 and R29. CTP contacts are provided by G26 and R29. The Mg(2+) site is built by D39 and D41. Residues R110, D153, R156, R159, and R162 each coordinate ATP. Positions 110, 153, 156, 159, and 162 each coordinate CTP.

Belongs to the tRNA nucleotidyltransferase/poly(A) polymerase family. Bacterial CCA-adding enzyme type 3 subfamily. As to quaternary structure, homodimer. Mg(2+) is required as a cofactor.

The enzyme catalyses a tRNA precursor + 2 CTP + ATP = a tRNA with a 3' CCA end + 3 diphosphate. The catalysed reaction is a tRNA with a 3' CCA end + 2 CTP + ATP = a tRNA with a 3' CCACCA end + 3 diphosphate. Catalyzes the addition and repair of the essential 3'-terminal CCA sequence in tRNAs without using a nucleic acid template. Adds these three nucleotides in the order of C, C, and A to the tRNA nucleotide-73, using CTP and ATP as substrates and producing inorganic pyrophosphate. tRNA 3'-terminal CCA addition is required both for tRNA processing and repair. Also involved in tRNA surveillance by mediating tandem CCA addition to generate a CCACCA at the 3' terminus of unstable tRNAs. While stable tRNAs receive only 3'-terminal CCA, unstable tRNAs are marked with CCACCA and rapidly degraded. The chain is CCA-adding enzyme from Bacillus cereus (strain ATCC 10987 / NRS 248).